A 387-amino-acid polypeptide reads, in one-letter code: Peptostreptococcal albumin-binding protein (387 aa).

A signal peptide spans Met1–Ala26. A disordered region spans residues Leu122–Arg155. Residues Thr213–Ala265 form a GA module region. The segment at Gly266–Arg360 is disordered. A compositionally biased stretch (polar residues) spans Asn270–Gln282. The segment covering Gly298–Arg360 has biased composition (basic and acidic residues). An LPXTG sorting signal motif is present at residues Leu355–Gly359. Ala358 is subject to Pentaglycyl murein peptidoglycan amidated alanine. Residues Gly359–Lys387 constitute a propeptide, removed by sortase.

It localises to the secreted. The protein localises to the cell wall. Binds serum albumin. The chain is Peptostreptococcal albumin-binding protein (pab) from Finegoldia magna (Peptostreptococcus magnus).